Consider the following 225-residue polypeptide: 2-C-methyl-D-erythritol 4-phosphate cytidylyltransferase (225 aa).

Belongs to the IspD/TarI cytidylyltransferase family. IspD subfamily.

The enzyme catalyses 2-C-methyl-D-erythritol 4-phosphate + CTP + H(+) = 4-CDP-2-C-methyl-D-erythritol + diphosphate. It participates in isoprenoid biosynthesis; isopentenyl diphosphate biosynthesis via DXP pathway; isopentenyl diphosphate from 1-deoxy-D-xylulose 5-phosphate: step 2/6. Functionally, catalyzes the formation of 4-diphosphocytidyl-2-C-methyl-D-erythritol from CTP and 2-C-methyl-D-erythritol 4-phosphate (MEP). The sequence is that of 2-C-methyl-D-erythritol 4-phosphate cytidylyltransferase from Haemophilus influenzae (strain PittGG).